The primary structure comprises 462 residues: Anthranilate synthase component 1 (462 aa).

L-tryptophan is bound by residues Ser-37 and 244–246 (PYM). Chorismate is bound at residue 279-280 (GT). A Mg(2+)-binding site is contributed by Glu-306. Chorismate-binding positions include Tyr-394, Arg-414, 428–430 (GAG), and Gly-430. Glu-443 lines the Mg(2+) pocket.

The protein belongs to the anthranilate synthase component I family. As to quaternary structure, heterotetramer consisting of two non-identical subunits: a beta subunit (TrpG) and a large alpha subunit (TrpE). Mg(2+) is required as a cofactor.

It carries out the reaction chorismate + L-glutamine = anthranilate + pyruvate + L-glutamate + H(+). The protein operates within amino-acid biosynthesis; L-tryptophan biosynthesis; L-tryptophan from chorismate: step 1/5. With respect to regulation, feedback inhibited by tryptophan. Its function is as follows. Part of a heterotetrameric complex that catalyzes the two-step biosynthesis of anthranilate, an intermediate in the biosynthesis of L-tryptophan. In the first step, the glutamine-binding beta subunit (TrpG) of anthranilate synthase (AS) provides the glutamine amidotransferase activity which generates ammonia as a substrate that, along with chorismate, is used in the second step, catalyzed by the large alpha subunit of AS (TrpE) to produce anthranilate. In the absence of TrpG, TrpE can synthesize anthranilate directly from chorismate and high concentrations of ammonia. This is Anthranilate synthase component 1 (trpE) from Thermus thermophilus (strain ATCC 27634 / DSM 579 / HB8).